The chain runs to 221 residues: 7-cyano-7-deazaguanine synthase (221 aa).

9–19 (YSGGMDSFTVL) contacts ATP. Zn(2+)-binding residues include cysteine 186, cysteine 194, cysteine 197, and cysteine 200.

Belongs to the QueC family. The cofactor is Zn(2+).

The enzyme catalyses 7-carboxy-7-deazaguanine + NH4(+) + ATP = 7-cyano-7-deazaguanine + ADP + phosphate + H2O + H(+). It participates in purine metabolism; 7-cyano-7-deazaguanine biosynthesis. Catalyzes the ATP-dependent conversion of 7-carboxy-7-deazaguanine (CDG) to 7-cyano-7-deazaguanine (preQ(0)). In Psychromonas ingrahamii (strain DSM 17664 / CCUG 51855 / 37), this protein is 7-cyano-7-deazaguanine synthase.